The sequence spans 641 residues: Kelch-like protein 22 (641 aa).

A disordered region spans residues 1–25 (MAEDLETMKPSQAPQQPSLPQGSSK). Low complexity predominate over residues 10 to 24 (PSQAPQQPSLPQGSS). A BTB domain is found at 50 to 117 (FDVVLKVEGK…IYTSDLALSV (68 aa)). Kelch repeat units lie at residues 299-349 (CVVG…VLNN), 350-399 (FVYL…VLGD), 400-446 (FLYA…ALDG), 448-493 (MYVA…ALQE), 494-544 (KIYL…VLAK), and 545-593 (KIFV…VLTL).

In terms of assembly, component of the BCR(KLHL22) E3 ubiquitin ligase complex, at least composed of cul3, klhl22 and rbx1.

The protein localises to the cytoplasm. Its subcellular location is the cytosol. It localises to the cytoskeleton. It is found in the microtubule organizing center. The protein resides in the centrosome. The protein localises to the spindle. Its subcellular location is the nucleus. It localises to the lysosome. Its pathway is protein modification; protein ubiquitination. Functionally, substrate-specific adapter of a BCR (BTB-CUL3-RBX1) E3 ubiquitin ligase complex. The BCR(KLHL22) ubiquitin ligase complex could mediate the monoubiquitination of PLK1 and regulate its activity in spindle assembly checkpoint (SAC) and chromosome segregation. The BCR(KLHL22) ubiquitin ligase complex may also be responsible for the ubiquitin-dependent proteasomal degradation of DEPDC5 and the activation of the TORC1 pathway. The sequence is that of Kelch-like protein 22 (klhl22) from Xenopus tropicalis (Western clawed frog).